The following is a 282-amino-acid chain: 2-dehydro-3-deoxyphosphooctonate aldolase (282 aa).

The protein belongs to the KdsA family.

The protein resides in the cytoplasm. It catalyses the reaction D-arabinose 5-phosphate + phosphoenolpyruvate + H2O = 3-deoxy-alpha-D-manno-2-octulosonate-8-phosphate + phosphate. The protein operates within carbohydrate biosynthesis; 3-deoxy-D-manno-octulosonate biosynthesis; 3-deoxy-D-manno-octulosonate from D-ribulose 5-phosphate: step 2/3. It functions in the pathway bacterial outer membrane biogenesis; lipopolysaccharide biosynthesis. The protein is 2-dehydro-3-deoxyphosphooctonate aldolase of Shewanella piezotolerans (strain WP3 / JCM 13877).